Here is a 559-residue protein sequence, read N- to C-terminus: Asparagine--tRNA ligase, cytoplasmic (559 aa).

Ser-72 bears the Phosphoserine mark. Residues Lys-255 and Lys-501 each carry the N6-acetyllysine modification.

The protein belongs to the class-II aminoacyl-tRNA synthetase family.

It is found in the cytoplasm. It catalyses the reaction tRNA(Asn) + L-asparagine + ATP = L-asparaginyl-tRNA(Asn) + AMP + diphosphate + H(+). This Bos taurus (Bovine) protein is Asparagine--tRNA ligase, cytoplasmic (NARS).